Consider the following 49-residue polypeptide: uncharacterized protein (49 aa).

Residues 8–28 traverse the membrane as a helical segment; that stretch reads FFLFSSGVLQATTLLLVILIF.

Its subcellular location is the cell membrane. This is an uncharacterized protein from Bacillus subtilis (strain 168).